Consider the following 320-residue polypeptide: tRNA dimethylallyltransferase (320 aa).

14–21 (GPTASGKT) serves as a coordination point for ATP. 16-21 (TASGKT) contributes to the substrate binding site. 2 interaction with substrate tRNA regions span residues 39 to 42 (DSAL) and 163 to 167 (QRLQR).

This sequence belongs to the IPP transferase family. As to quaternary structure, monomer. It depends on Mg(2+) as a cofactor.

It catalyses the reaction adenosine(37) in tRNA + dimethylallyl diphosphate = N(6)-dimethylallyladenosine(37) in tRNA + diphosphate. Its function is as follows. Catalyzes the transfer of a dimethylallyl group onto the adenine at position 37 in tRNAs that read codons beginning with uridine, leading to the formation of N6-(dimethylallyl)adenosine (i(6)A). This Thioalkalivibrio sulfidiphilus (strain HL-EbGR7) protein is tRNA dimethylallyltransferase.